A 530-amino-acid chain; its full sequence is Ubiquitin carboxyl-terminal hydrolase 17-like protein 11 (530 aa).

Positions 80–375 constitute a USP domain; it reads AGLQNMGNTC…QAYVLFYIQK (296 aa). C89 serves as the catalytic Nucleophile. H334 (proton acceptor) is an active-site residue. Composition is skewed to basic and acidic residues over residues 382 to 392 and 398 to 413; these read SESVSRGREPR and DTDR…RDHP. 2 disordered regions span residues 382–413 and 509–530; these read SESV…RDHP and RGRA…LVCQ. Residues 510–524 are compositionally biased toward basic residues; that stretch reads GRARRSKGKNKHSKR.

It belongs to the peptidase C19 family. USP17 subfamily.

The protein resides in the nucleus. Its subcellular location is the endoplasmic reticulum. The catalysed reaction is Thiol-dependent hydrolysis of ester, thioester, amide, peptide and isopeptide bonds formed by the C-terminal Gly of ubiquitin (a 76-residue protein attached to proteins as an intracellular targeting signal).. In terms of biological role, deubiquitinating enzyme that removes conjugated ubiquitin from specific proteins to regulate different cellular processes that may include cell proliferation, progression through the cell cycle, apoptosis, cell migration, and the cellular response to viral infection. The chain is Ubiquitin carboxyl-terminal hydrolase 17-like protein 11 (USP17L11) from Homo sapiens (Human).